Reading from the N-terminus, the 268-residue chain is Tryptophan synthase alpha chain (268 aa).

Catalysis depends on proton acceptor residues glutamate 49 and aspartate 60.

The protein belongs to the TrpA family. As to quaternary structure, tetramer of two alpha and two beta chains.

The enzyme catalyses (1S,2R)-1-C-(indol-3-yl)glycerol 3-phosphate + L-serine = D-glyceraldehyde 3-phosphate + L-tryptophan + H2O. It participates in amino-acid biosynthesis; L-tryptophan biosynthesis; L-tryptophan from chorismate: step 5/5. Its function is as follows. The alpha subunit is responsible for the aldol cleavage of indoleglycerol phosphate to indole and glyceraldehyde 3-phosphate. The sequence is that of Tryptophan synthase alpha chain from Shigella dysenteriae serotype 1 (strain Sd197).